The primary structure comprises 229 residues: ACD11 homolog protein (229 aa).

5 residues coordinate an N-acylsphingoid base 1-phosphate: E84, K88, R123, R127, and H166.

Belongs to the GLTP family.

The chain is ACD11 homolog protein from Arabidopsis thaliana (Mouse-ear cress).